The sequence spans 241 residues: Uracil-DNA glycosylase (241 aa).

Asp-71 acts as the Proton acceptor in catalysis.

Belongs to the uracil-DNA glycosylase (UDG) superfamily. UNG family.

Its subcellular location is the cytoplasm. The catalysed reaction is Hydrolyzes single-stranded DNA or mismatched double-stranded DNA and polynucleotides, releasing free uracil.. In terms of biological role, excises uracil residues from the DNA which can arise as a result of misincorporation of dUMP residues by DNA polymerase or due to deamination of cytosine. The protein is Uracil-DNA glycosylase of Xanthomonas euvesicatoria pv. vesicatoria (strain 85-10) (Xanthomonas campestris pv. vesicatoria).